Consider the following 1005-residue polypeptide: Vacuolar membrane protease (1005 aa).

The Cytoplasmic segment spans residues 1-14 (MAKETTARSILGYQ). Residues 15–35 (TLPTTALIALIYVVAFFSVLV) traverse the membrane as a helical segment. Topologically, residues 36–353 (SDQLPSIPHP…PEDSAKQKSK (318 aa)) are vacuolar. N-linked (GlcNAc...) asparagine glycosylation is present at asparagine 107. Residues histidine 152 and aspartate 164 each contribute to the Zn(2+) site. Glutamate 196 functions as the Proton acceptor in the catalytic mechanism. Glutamate 197 serves as a coordination point for Zn(2+). Asparagine 213 carries N-linked (GlcNAc...) asparagine glycosylation. 2 residues coordinate Zn(2+): glutamate 222 and histidine 311. Residues 354–374 (PGVYFDRPVVLALLWAIGAVL) traverse the membrane as a helical segment. The Cytoplasmic segment spans residues 375–448 (KHNAGSPPPP…LITVWKQASF (74 aa)). The interval 379–420 (GSPPPPPKPTVPHSANNASAGTGRPGASTRQPTRSFGSNEDA) is disordered. A compositionally biased stretch (polar residues) spans 406-419 (STRQPTRSFGSNED). The chain crosses the membrane as a helical span at residues 449–469 (WIALIVTVGLQALLAWGYVAI). Topologically, residues 470–479 (NPFTIYSRPY) are vacuolar. The helical transmembrane segment at 480-500 (FVLLSFFALSFFSMTLVLQAA) threads the bilayer. Residues 501-519 (FPSSPVKHAIEVREQEKTT) lie on the Cytoplasmic side of the membrane. A helical transmembrane segment spans residues 520-540 (ILLHLHLLSWIALLLSTILIG). Over 541–543 (KSQ) the chain is Vacuolar. Residues 544-564 (VGSFYVVTVWYLGIWAATVIG) traverse the membrane as a helical segment. Topologically, residues 565-644 (TLQPILVSKR…RKTNSKSKED (80 aa)) are cytoplasmic. The tract at residues 577–640 (DKGKRRARRS…ASNRRKTNSK (64 aa)) is disordered. Over residues 588–606 (SASTSSSSSSSSSSSSGSD) the composition is skewed to low complexity. Residues 645 to 665 (GAIGWWIAQVLLTVPPVVMLV) form a helical membrane-spanning segment. Residues 666 to 686 (GQITSIVLEAMNQTLTDGNSA) lie on the Vacuolar side of the membrane. A glycan (N-linked (GlcNAc...) asparagine) is linked at asparagine 677. Residues 687 to 707 (WSIYLLTALLATMLVLPVAPF) form a helical membrane-spanning segment. Topologically, residues 708–713 (SPKLHR) are cytoplasmic. The chain crosses the membrane as a helical span at residues 714–734 (GLIFLSAAVFVGFTIYLWVVF). Residues 735-1005 (PFTRQDPFKV…VEASAPFTVV (271 aa)) are Vacuolar-facing. N-linked (GlcNAc...) asparagine glycans are attached at residues asparagine 761 and asparagine 961.

Belongs to the peptidase M28 family. It depends on Zn(2+) as a cofactor.

Its subcellular location is the vacuole membrane. Functionally, may be involved in vacuolar sorting and osmoregulation. The protein is Vacuolar membrane protease of Coprinopsis cinerea (strain Okayama-7 / 130 / ATCC MYA-4618 / FGSC 9003) (Inky cap fungus).